The following is a 160-amino-acid chain: NADH-quinone oxidoreductase subunit I (160 aa).

2 4Fe-4S ferredoxin-type domains span residues Leu-51–Ala-81 and Val-91–Asn-120. [4Fe-4S] cluster-binding residues include Cys-61, Cys-64, Cys-67, Cys-71, Cys-100, Cys-103, Cys-106, and Cys-110.

It belongs to the complex I 23 kDa subunit family. As to quaternary structure, NDH-1 is composed of 14 different subunits. Subunits NuoA, H, J, K, L, M, N constitute the membrane sector of the complex. [4Fe-4S] cluster is required as a cofactor.

The protein resides in the cell inner membrane. It catalyses the reaction a quinone + NADH + 5 H(+)(in) = a quinol + NAD(+) + 4 H(+)(out). NDH-1 shuttles electrons from NADH, via FMN and iron-sulfur (Fe-S) centers, to quinones in the respiratory chain. The immediate electron acceptor for the enzyme in this species is believed to be ubiquinone. Couples the redox reaction to proton translocation (for every two electrons transferred, four hydrogen ions are translocated across the cytoplasmic membrane), and thus conserves the redox energy in a proton gradient. The polypeptide is NADH-quinone oxidoreductase subunit I (Anaplasma marginale (strain St. Maries)).